Reading from the N-terminus, the 275-residue chain is 18S rRNA (guanine(1575)-N(7))-methyltransferase (275 aa).

The segment at 256 to 275 (RGRKVAKDSKFTGRKRRHRF) is disordered. Positions 257–264 (GRKVAKDS) match the Nuclear localization signal motif.

The protein belongs to the class I-like SAM-binding methyltransferase superfamily. BUD23/WBSCR22 family. Interacts with TRM112. Interacts with ECM16.

The protein resides in the cytoplasm. Its subcellular location is the nucleus. The enzyme catalyses guanosine(1575) in yeast 18S rRNA + S-adenosyl-L-methionine = N(7)-methylguanosine(1575) in yeast 18S rRNA + S-adenosyl-L-homocysteine. Functionally, S-adenosyl-L-methionine-dependent methyltransferase that specifically methylates the N(7) position of guanine 1575 (m7G1575) in 18S rRNA. Requires the methyltransferase adapter protein TRM112 for full rRNA methyltransferase activity. Important for biogenesis end export of the 40S ribosomal subunit independent on its methyltransferase activity. Required for efficient cleavage of the primary 35S precursor rRNA at site A2. Involved in positioning the proximal bud pole signal. The protein is 18S rRNA (guanine(1575)-N(7))-methyltransferase (BUD23) of Saccharomyces cerevisiae (strain ATCC 204508 / S288c) (Baker's yeast).